The sequence spans 753 residues: 5-methyltetrahydropteroyltriglutamate--homocysteine methyltransferase (753 aa).

5-methyltetrahydropteroyltri-L-glutamate contacts are provided by residues 17 to 20 (RELK) and lysine 117. L-homocysteine contacts are provided by residues 431 to 433 (IGS) and glutamate 484. Residues 431 to 433 (IGS) and glutamate 484 contribute to the L-methionine site. 5-methyltetrahydropteroyltri-L-glutamate-binding positions include 515-516 (RC) and tryptophan 561. Residue aspartate 599 participates in L-homocysteine binding. Aspartate 599 is a binding site for L-methionine. Residue glutamate 605 participates in 5-methyltetrahydropteroyltri-L-glutamate binding. Zn(2+) contacts are provided by histidine 641, cysteine 643, and glutamate 665. The Proton donor role is filled by histidine 694. Cysteine 726 is a Zn(2+) binding site.

It belongs to the vitamin-B12 independent methionine synthase family. Zn(2+) serves as cofactor.

The enzyme catalyses 5-methyltetrahydropteroyltri-L-glutamate + L-homocysteine = tetrahydropteroyltri-L-glutamate + L-methionine. It participates in amino-acid biosynthesis; L-methionine biosynthesis via de novo pathway; L-methionine from L-homocysteine (MetE route): step 1/1. In terms of biological role, catalyzes the transfer of a methyl group from 5-methyltetrahydrofolate to homocysteine resulting in methionine formation. The protein is 5-methyltetrahydropteroyltriglutamate--homocysteine methyltransferase of Escherichia coli (strain ATCC 8739 / DSM 1576 / NBRC 3972 / NCIMB 8545 / WDCM 00012 / Crooks).